Consider the following 304-residue polypeptide: Pseudouridine-5'-phosphate glycosidase (304 aa).

Glu25 serves as the catalytic Proton donor. 2 residues coordinate substrate: Lys88 and Val108. Residue Asp140 participates in Mn(2+) binding. Position 142–144 (142–144 (SAD)) interacts with substrate. Catalysis depends on Lys161, which acts as the Nucleophile.

It belongs to the pseudouridine-5'-phosphate glycosidase family. As to quaternary structure, homotrimer. Mn(2+) serves as cofactor.

It carries out the reaction D-ribose 5-phosphate + uracil = psi-UMP + H2O. Its function is as follows. Catalyzes the reversible cleavage of pseudouridine 5'-phosphate (PsiMP) to ribose 5-phosphate and uracil. Functions biologically in the cleavage direction, as part of a pseudouridine degradation pathway. This is Pseudouridine-5'-phosphate glycosidase from Paracoccus denitrificans (strain Pd 1222).